A 370-amino-acid polypeptide reads, in one-letter code: 3-isopropylmalate dehydrogenase (370 aa).

77 to 90 (GPKWDAVPYEVRPE) is a binding site for NAD(+). Residues R97, R107, R135, and D226 each coordinate substrate. Residues D226, D250, and D254 each contribute to the Mg(2+) site. 290–302 (GSAPDIAGTGVAN) contacts NAD(+).

It belongs to the isocitrate and isopropylmalate dehydrogenases family. LeuB type 1 subfamily. Homodimer. Mg(2+) serves as cofactor. The cofactor is Mn(2+).

It is found in the cytoplasm. The enzyme catalyses (2R,3S)-3-isopropylmalate + NAD(+) = 4-methyl-2-oxopentanoate + CO2 + NADH. The protein operates within amino-acid biosynthesis; L-leucine biosynthesis; L-leucine from 3-methyl-2-oxobutanoate: step 3/4. Catalyzes the oxidation of 3-carboxy-2-hydroxy-4-methylpentanoate (3-isopropylmalate) to 3-carboxy-4-methyl-2-oxopentanoate. The product decarboxylates to 4-methyl-2 oxopentanoate. This chain is 3-isopropylmalate dehydrogenase, found in Rhizobium meliloti (strain 1021) (Ensifer meliloti).